The primary structure comprises 78 residues: Mitotic-spindle organizing protein 1 (78 aa).

N-acetylalanine is present on alanine 2.

This sequence belongs to the MOZART1 family. In terms of assembly, associates with the gamma-tubulin ring complex (gTuRC) consisting of TUBGCP2, TUBGCP3, TUBGCP4, TUBGCP5 and TUBGCP6 and gamma-tubulin TUBG1 or TUBG2; within the complex, interacts with TUBGCP3 and TUBGCP6 to form a luminal bridge with actin that stabilizes the initial structure during complex assembly. Interacts with TUBG1.

The protein resides in the cytoplasm. The protein localises to the cytoskeleton. Its subcellular location is the microtubule organizing center. It localises to the centrosome. It is found in the spindle. In terms of biological role, required for the recruitment and the assembly of the gamma-tubulin ring complex (gTuRC) at the centrosome. The gTuRC regulates the minus-end nucleation of alpha-beta tubulin heterodimers that grow into microtubule protafilaments, a critical step in centrosome duplication and spindle formation. The chain is Mitotic-spindle organizing protein 1 (Mzt1) from Mus musculus (Mouse).